The following is a 478-amino-acid chain: MKKQWTRRSAAAIAMVTTLLLSSHSFAASENNERVDPRNEAYAKDHADQYDSWRSTSDSVQIEDALAEDPNMVILWAGYGFAKDYNKARGHFYAVDDVRQTLRTGGPTDENSGPMPMACWSCKSPDVGRVIEEQGEDGYFSGKWARLGSEIQNPIGCADCHDTRSEEFKNGGPALALTKPHVERAMDAIGKPFGDQSRLDQQAAVCGQCHVEYYFTGKTKAVKFPWDKGTTVDEMEEYYDEIGFKDWTHKVSKAPMLKAQHPGYETWRDGIHGKNKVTCVDCHMPKVTKEDGTVYTDHKVGNPFDRFEDTCANCHTQSKEMLQSVVATRKAQVLKMKLTAERQIVAAHFEAGAAWDAGATEKEMAPILQDIRHAQWRWDYAIASHGVHMHAPEVALEVLGTAVDKAADARTKLVRLLAKKGITEPVAIPDISTKAAAQKALGMDMEAMKAEKKHFLETVVPEWEEQAKEREARDYEPM.

The signal sequence occupies residues 1–27 (MKKQWTRRSAAAIAMVTTLLLSSHSFA). Histidine 91 contacts heme c. Heme contacts are provided by cysteine 119, cysteine 122, and lysine 123. 6 residues coordinate heme c: cysteine 157, cysteine 160, histidine 161, cysteine 206, cysteine 209, and histidine 210. Residues glutamate 212, tyrosine 213, lysine 258, and glutamine 260 each contribute to the Ca(2+) site. Residue tyrosine 213 coordinates substrate. Histidine 261 lines the substrate pocket. The heme c site is built by histidine 272, cysteine 279, cysteine 282, histidine 283, histidine 298, cysteine 311, cysteine 314, histidine 315, and histidine 390.

It belongs to the cytochrome c-552 family. Ca(2+) is required as a cofactor. The cofactor is heme c.

It is found in the periplasm. The enzyme catalyses 6 Fe(III)-[cytochrome c] + NH4(+) + 2 H2O = 6 Fe(II)-[cytochrome c] + nitrite + 8 H(+). The protein operates within nitrogen metabolism; nitrate reduction (assimilation). Catalyzes the reduction of nitrite to ammonia, consuming six electrons in the process. In Aliivibrio fischeri (strain ATCC 700601 / ES114) (Vibrio fischeri), this protein is Cytochrome c-552.